Reading from the N-terminus, the 281-residue chain is Ribosomal RNA small subunit methyltransferase A (281 aa).

S-adenosyl-L-methionine contacts are provided by Asn-25, Leu-27, Gly-52, Glu-73, Asp-99, and Asn-118.

Belongs to the class I-like SAM-binding methyltransferase superfamily. rRNA adenine N(6)-methyltransferase family. RsmA subfamily.

It is found in the cytoplasm. It catalyses the reaction adenosine(1518)/adenosine(1519) in 16S rRNA + 4 S-adenosyl-L-methionine = N(6)-dimethyladenosine(1518)/N(6)-dimethyladenosine(1519) in 16S rRNA + 4 S-adenosyl-L-homocysteine + 4 H(+). Specifically dimethylates two adjacent adenosines (A1518 and A1519) in the loop of a conserved hairpin near the 3'-end of 16S rRNA in the 30S particle. May play a critical role in biogenesis of 30S subunits. The chain is Ribosomal RNA small subunit methyltransferase A from Erythrobacter litoralis (strain HTCC2594).